The sequence spans 215 residues: Probable serine/threonine-protein kinase 2 (215 aa).

One can recognise a Protein kinase domain in the interval 1–205; that stretch reads MKPEQLVYLN…WLLKEMEQLL (205 aa).

The protein belongs to the protein kinase superfamily. Ser/Thr protein kinase family. As to quaternary structure, interacts with the kinase domain of host EIF2AK2.

The protein localises to the host cytoplasm. It catalyses the reaction L-seryl-[protein] + ATP = O-phospho-L-seryl-[protein] + ADP + H(+). The enzyme catalyses L-threonyl-[protein] + ATP = O-phospho-L-threonyl-[protein] + ADP + H(+). Functionally, plays a role in the inhibition of host eIF2alpha/EIF2S1 phosphorylation, thereby increasing viral fitness. In the insect host, targets the endogenous insect heme-regulated inhibitor (HRI)-like eIF2alpha kinase. The chain is Probable serine/threonine-protein kinase 2 (PK2) from Autographa californica nuclear polyhedrosis virus (AcMNPV).